We begin with the raw amino-acid sequence, 364 residues long: Rhomboid domain-containing protein 2 (364 aa).

The next 5 helical transmembrane spans lie at 11 to 31 (WCLC…SLLV), 63 to 83 (LVTY…AIII), 100 to 120 (CFFT…FEAV), 158 to 178 (FGMV…SWLI), and 184 to 204 (LSNV…CYSI). Disordered stretches follow at residues 242 to 282 (AQSR…KLAS) and 317 to 364 (SSVY…VPMP). Polar residues-rich tracts occupy residues 267-276 (HPVSQTQHAS) and 317-329 (SSVY…TSLG).

Belongs to the peptidase S54 family.

It localises to the golgi apparatus. The protein resides in the cis-Golgi network membrane. The polypeptide is Rhomboid domain-containing protein 2 (RHBDD2) (Homo sapiens (Human)).